A 126-amino-acid polypeptide reads, in one-letter code: Class I hydrophobin 1 (126 aa).

The signal sequence occupies residues 1–16 (MQYMTIVAFLAATVAA). 4 cysteine pairs are disulfide-bonded: cysteine 38–cysteine 100, cysteine 46–cysteine 94, cysteine 47–cysteine 75, and cysteine 101–cysteine 119.

Belongs to the fungal hydrophobin family.

Its subcellular location is the secreted. It is found in the cell wall. In terms of biological role, aerial growth, conidiation, and dispersal of filamentous fungi in the environment rely upon a capability of their secreting small amphipathic proteins called hydrophobins (HPBs) with low sequence identity. Class I can self-assemble into an outermost layer of rodlet bundles on aerial cell surfaces, conferring cellular hydrophobicity that supports fungal growth, development and dispersal; whereas Class II form highly ordered films at water-air interfaces through intermolecular interactions but contribute nothing to the rodlet structure. HYD1 and HYD2 are required for the structural integrity of the long aerial chains of microconidia. Does not seem to be important for the ability to cause seedling disease. This is Class I hydrophobin 1 from Gibberella moniliformis (Maize ear and stalk rot fungus).